The chain runs to 405 residues: Argininosuccinate synthase (405 aa).

ATP is bound at residue 11–19 (AYSGGLDTS). Residue Tyr90 participates in L-citrulline binding. Residue Gly119 participates in ATP binding. The L-aspartate site is built by Thr121, Asn125, and Asp126. Asn125 lines the L-citrulline pocket. L-citrulline-binding residues include Arg129, Ser178, Ser187, Glu263, and Tyr275.

Belongs to the argininosuccinate synthase family. Type 1 subfamily. As to quaternary structure, homotetramer.

The protein localises to the cytoplasm. It carries out the reaction L-citrulline + L-aspartate + ATP = 2-(N(omega)-L-arginino)succinate + AMP + diphosphate + H(+). It participates in amino-acid biosynthesis; L-arginine biosynthesis; L-arginine from L-ornithine and carbamoyl phosphate: step 2/3. The polypeptide is Argininosuccinate synthase (Legionella pneumophila subsp. pneumophila (strain Philadelphia 1 / ATCC 33152 / DSM 7513)).